The primary structure comprises 356 residues: Cysteine protease XCP2 (356 aa).

A signal peptide spans 1–26; the sequence is MALSSPSRILCFALALSAASLSLSFA. Residues 27 to 137 constitute a propeptide, activation peptide; that stretch reads SSHDYSIVGY…AEFAYRDVEA (111 aa). Disulfide bonds link Cys-159–Cys-201, Cys-193–Cys-234, and Cys-292–Cys-343. Residue Cys-162 is part of the active site. The N-linked (GlcNAc...) asparagine glycan is linked to Asn-181. Residues His-298 and Asn-318 contribute to the active site.

The protein belongs to the peptidase C1 family. Interacts with PRN2. Mostly expressed in roots, stems and flowers. Confined to tracheary elements, and specifically to xylem.

Its subcellular location is the vacuole. The protein localises to the cell membrane. Functionally, cysteine protease involved in xylem tracheary element (TE) autolysis during xylogenesis in roots. Participates in micro autolysis within the intact central vacuole before mega autolysis is initiated by tonoplast implosion. Involved in susceptibility to the bacterial plant pathogen Ralstonia solanacearum. The sequence is that of Cysteine protease XCP2 from Arabidopsis thaliana (Mouse-ear cress).